We begin with the raw amino-acid sequence, 169 residues long: Cell division inhibitor SulA (169 aa).

The span at 1–13 (MFTSAHANRSAQA) shows a compositional bias: polar residues. Positions 1-26 (MFTSAHANRSAQASAPAGHYAHRSGE) are disordered. The tract at residues 106-112 (ALRTGNY) is ftsZ binding. The lon protease binding stretch occupies residues 162–169 (KIHSNLYH).

It belongs to the SulA family. Interacts with FtsZ. In terms of processing, is rapidly cleaved and degraded by the Lon protease once DNA damage is repaired.

Its function is as follows. Component of the SOS system and an inhibitor of cell division. Accumulation of SulA causes rapid cessation of cell division and the appearance of long, non-septate filaments. In the presence of GTP, binds a polymerization-competent form of FtsZ in a 1:1 ratio, thus inhibiting FtsZ polymerization and therefore preventing it from participating in the assembly of the Z ring. This mechanism prevents the premature segregation of damaged DNA to daughter cells during cell division. The sequence is that of Cell division inhibitor SulA from Klebsiella pneumoniae subsp. pneumoniae (strain ATCC 700721 / MGH 78578).